A 360-amino-acid polypeptide reads, in one-letter code: Tubulin-like protein CetZ2 (360 aa).

GTP is bound by residues 10–14 (QAGGK), 65–66 (GG), 106–108 (GSG), E138, N165, and N183. A compositionally biased stretch (basic and acidic residues) spans 334 to 354 (EAIDKAETEPREDPKGMWHSD). The tract at residues 334-360 (EAIDKAETEPREDPKGMWHSDDLDDLL) is disordered.

Belongs to the CetZ family.

The protein localises to the cytoplasm. Its function is as follows. Involved in cell shape control. The polypeptide is Tubulin-like protein CetZ2 (Haloferax volcanii (strain ATCC 29605 / DSM 3757 / JCM 8879 / NBRC 14742 / NCIMB 2012 / VKM B-1768 / DS2) (Halobacterium volcanii)).